The chain runs to 120 residues: uncharacterized protein (120 aa).

Residues 19 to 41 (YPELFITWCVMTYTFGVAGYMLG) form a helical membrane-spanning segment. Positions 57 to 78 (SKNAHPWEDTKSSSGKSDESLD) are disordered. Basic and acidic residues predominate over residues 61–75 (HPWEDTKSSSGKSDE).

It is found in the membrane. This is an uncharacterized protein from Schizosaccharomyces pombe (strain 972 / ATCC 24843) (Fission yeast).